A 675-amino-acid chain; its full sequence is Heat shock 70 kDa protein 12A (675 aa).

The disordered stretch occupies residues methionine 1 to aspartate 45. An N-acetylalanine modification is found at alanine 2. A compositionally biased stretch (polar residues) spans alanine 17 to alanine 26.

This sequence belongs to the heat shock protein 70 family. Interacts with SORL1 (via cytosolic C-terminus); this interaction affects SORL1 internalization and subcellular localization. In terms of tissue distribution, expressed most strongly in brain, kidney and heart with little or no expression in other tissues. In the brain, expressed in glial cells, including astrocytes (at protein level). In the aorta, preferentially expressed in lesions.

Its subcellular location is the cytoplasm. It is found in the nucleus. In terms of biological role, adapter protein for SORL1, but not SORT1. Delays SORL1 internalization and affects SORL1 subcellular localization. The protein is Heat shock 70 kDa protein 12A (Hspa12a) of Mus musculus (Mouse).